Here is a 173-residue protein sequence, read N- to C-terminus: Shikimate kinase 1 (173 aa).

Residue 14–19 (GAGKST) coordinates ATP. S18 lines the Mg(2+) pocket. The substrate site is built by D36, R60, and G82. Position 120 (R120) interacts with ATP. Substrate is bound at residue R140.

Belongs to the shikimate kinase family. Monomer. Mg(2+) is required as a cofactor.

The protein localises to the cytoplasm. It catalyses the reaction shikimate + ATP = 3-phosphoshikimate + ADP + H(+). The protein operates within metabolic intermediate biosynthesis; chorismate biosynthesis; chorismate from D-erythrose 4-phosphate and phosphoenolpyruvate: step 5/7. Its function is as follows. Catalyzes the specific phosphorylation of the 3-hydroxyl group of shikimic acid using ATP as a cosubstrate. This Hamiltonella defensa subsp. Acyrthosiphon pisum (strain 5AT) protein is Shikimate kinase 1.